The following is a 469-amino-acid chain: Zinc finger and BTB domain-containing protein 8A.1-B (469 aa).

In terms of domain architecture, BTB spans cysteine 24 to glycine 92. C2H2-type zinc fingers lie at residues phenylalanine 315–histidine 337 and tyrosine 343–histidine 366.

It localises to the nucleus. In terms of biological role, may be involved in transcriptional regulation. This Xenopus laevis (African clawed frog) protein is Zinc finger and BTB domain-containing protein 8A.1-B (zbtb8a.1-b).